We begin with the raw amino-acid sequence, 203 residues long: Small ribosomal subunit protein uS4 (203 aa).

Residues 93-154 enclose the S4 RNA-binding domain; the sequence is RRFDNVVYRC…KSRNLDAVAD (62 aa).

It belongs to the universal ribosomal protein uS4 family. Part of the 30S ribosomal subunit. Contacts protein S5. The interaction surface between S4 and S5 is involved in control of translational fidelity.

In terms of biological role, one of the primary rRNA binding proteins, it binds directly to 16S rRNA where it nucleates assembly of the body of the 30S subunit. With S5 and S12 plays an important role in translational accuracy. This Chlorobaculum parvum (strain DSM 263 / NCIMB 8327) (Chlorobium vibrioforme subsp. thiosulfatophilum) protein is Small ribosomal subunit protein uS4.